Reading from the N-terminus, the 502-residue chain is MLSPVNVSIESLNLMTLVPMLIPIIGALFIIVIDLFKSEQDKSLYVMLSLLILGVDFVALVDSAGVFANNGTIMGVFDMMLIDGLAILSQFIIVGASMLFIPLALTHKRFHEFSYPEFFALFLFMIAGFQFMVSTDNLILIFVGLETASLALYTLIAMHNRDKSFEAAVKYFTMGALAAGFFSFGSMVFYALTGSVEINQIATVLTANNYADIGFVLVGVVFLLAAFGFKLSMVPFHTWTPDVYEGSSAALAGYMSIVPKIAAFIVAMRLFEFLIHSGVVWLEVILYMGVVVTMTMANIWALVQSDVKRMLAYSSISHAGFVMAAILIGTTQSNSALFLYWILFSFTNLGSFSMLWISRQKNLPAHQQSDHSYDKFAGMVKTSPVAASIMALFMLSLAGIPPFALFWGKMYLMSSAITGGYTVLALIMALNSAIAGYYYLKLIVYMFMKDPVVENNGHVYSANATLPLKTIIGIAAIGTIFAFVAVNQLIEFVTLFVYNSGY.

14 consecutive transmembrane segments (helical) span residues 16–36 (TLVPMLIPIIGALFIIVIDLF), 47–67 (MLSLLILGVDFVALVDSAGVF), 85–105 (LAILSQFIIVGASMLFIPLAL), 113–133 (FSYPEFFALFLFMIAGFQFMV), 138–158 (LILIFVGLETASLALYTLIAM), 172–192 (FTMGALAAGFFSFGSMVFYAL), 213–233 (IGFVLVGVVFLLAAFGFKLSM), 248–268 (SAALAGYMSIVPKIAAFIVAM), 273–293 (FLIHSGVVWLEVILYMGVVVT), 310–330 (MLAYSSISHAGFVMAAILIGT), 337–357 (LFLYWILFSFTNLGSFSMLWI), 387–407 (ASIMALFMLSLAGIPPFALFW), 410–430 (MYLMSSAITGGYTVLALIMAL), and 470–490 (TIIGIAAIGTIFAFVAVNQLI).

Belongs to the complex I subunit 2 family. In terms of assembly, NDH-1 is composed of 14 different subunits. Subunits NuoA, H, J, K, L, M, N constitute the membrane sector of the complex.

It localises to the cell inner membrane. The enzyme catalyses a quinone + NADH + 5 H(+)(in) = a quinol + NAD(+) + 4 H(+)(out). In terms of biological role, NDH-1 shuttles electrons from NADH, via FMN and iron-sulfur (Fe-S) centers, to quinones in the respiratory chain. The immediate electron acceptor for the enzyme in this species is believed to be ubiquinone. Couples the redox reaction to proton translocation (for every two electrons transferred, four hydrogen ions are translocated across the cytoplasmic membrane), and thus conserves the redox energy in a proton gradient. This is NADH-quinone oxidoreductase subunit N from Sulfurimonas denitrificans (strain ATCC 33889 / DSM 1251) (Thiomicrospira denitrificans (strain ATCC 33889 / DSM 1251)).